The following is a 211-amino-acid chain: FMN-dependent NADH:quinone oxidoreductase (211 aa).

Residues Ser-10, 16-18, and 138-141 each bind FMN; these read STS and TQGG.

The protein belongs to the azoreductase type 1 family. In terms of assembly, homodimer. FMN serves as cofactor.

It catalyses the reaction 2 a quinone + NADH + H(+) = 2 a 1,4-benzosemiquinone + NAD(+). The catalysed reaction is N,N-dimethyl-1,4-phenylenediamine + anthranilate + 2 NAD(+) = 2-(4-dimethylaminophenyl)diazenylbenzoate + 2 NADH + 2 H(+). Quinone reductase that provides resistance to thiol-specific stress caused by electrophilic quinones. Functionally, also exhibits azoreductase activity. Catalyzes the reductive cleavage of the azo bond in aromatic azo compounds to the corresponding amines. This chain is FMN-dependent NADH:quinone oxidoreductase, found in Frankia alni (strain DSM 45986 / CECT 9034 / ACN14a).